The sequence spans 290 residues: Putative heme oxygenase 3 (290 aa).

Over residues Met1–Asp12 the composition is skewed to acidic residues. Positions Met1–Ser33 are disordered. Basic and acidic residues predominate over residues Glu13–Ser33. 2 HRM repeats span residues Lys238–Ala243 and Asn255–Met260.

Belongs to the heme oxygenase family. Found in the spleen, liver, thymus, prostate, heart, kidney, brain and testis.

The catalysed reaction is heme b + 3 reduced [NADPH--hemoprotein reductase] + 3 O2 = biliverdin IXalpha + CO + Fe(2+) + 3 oxidized [NADPH--hemoprotein reductase] + 3 H2O + H(+). Functionally, heme oxygenase cleaves the heme ring at the alpha methene bridge to form biliverdin. Biliverdin is subsequently converted to bilirubin by biliverdin reductase. Heme oxygenase 3 could be implicated in some heme-dependent regulatory role in the cell. The sequence is that of Putative heme oxygenase 3 (Hmox3) from Rattus norvegicus (Rat).